The chain runs to 54 residues: UPF0391 membrane protein R00741 (54 aa).

Transmembrane regions (helical) follow at residues 5–25 (ALVF…GIAG) and 30–50 (IAQV…VAGL).

The protein belongs to the UPF0391 family.

Its subcellular location is the cell membrane. This chain is UPF0391 membrane protein R00741, found in Rhizobium meliloti (strain 1021) (Ensifer meliloti).